The chain runs to 431 residues: GTPase Obg (431 aa).

Residues 1–158 (MFVDQVKINV…REIRLELKVL (158 aa)) enclose the Obg domain. The interval 125 to 145 (GNIHFASPKNPAPEIAENGEP) is disordered. Residues 159–335 (ADVGLVGFPS…LLQRTADMLA (177 aa)) form the OBG-type G domain. GTP-binding positions include 165–172 (GFPSVGKS), 190–194 (FTTLV), 212–215 (DLPG), 282–285 (NKMD), and 316–318 (SAL). Ser-172 and Thr-192 together coordinate Mg(2+). In terms of domain architecture, OCT spans 353-431 (YNFQPEAEFT…IDDFTFEYMA (79 aa)).

The protein belongs to the TRAFAC class OBG-HflX-like GTPase superfamily. OBG GTPase family. In terms of assembly, monomer. Mg(2+) serves as cofactor.

The protein localises to the cytoplasm. In terms of biological role, an essential GTPase which binds GTP, GDP and possibly (p)ppGpp with moderate affinity, with high nucleotide exchange rates and a fairly low GTP hydrolysis rate. Plays a role in control of the cell cycle, stress response, ribosome biogenesis and in those bacteria that undergo differentiation, in morphogenesis control. The polypeptide is GTPase Obg (Levilactobacillus brevis (strain ATCC 367 / BCRC 12310 / CIP 105137 / JCM 1170 / LMG 11437 / NCIMB 947 / NCTC 947) (Lactobacillus brevis)).